A 1518-amino-acid polypeptide reads, in one-letter code: Putative cellulose synthase 2 (1518 aa).

Residues 1-731 (MYGTWFTTGK…EEKLEKQSFV (731 aa)) are catalytic. 3 helical membrane-spanning segments follow: residues 24–44 (PVWV…SVRI), 71–91 (ITVF…VWRL), and 105–125 (LAVL…LSYF). The tract at residues 144 to 237 (QWPSVDVFVP…FAVIFDCDHV (94 aa)) is catalytic subdomain A. Aspartate 186 is a catalytic residue. Substrate contacts are provided by aspartate 233 and aspartate 235. A catalytic subdomain B region spans residues 314–374 (EAVMGIGGFA…GQRVRWARGM (61 aa)). The active site involves aspartate 330. Transmembrane regions (helical) follow at residues 404–424 (FLFA…LFLG), 427–447 (IIAA…FHSV), 465–485 (IYET…LLQP), 514–534 (ILAG…VWQF), and 543–563 (FILN…SIAV). A PilZ domain is found at 569-668 (QTRNAPRVSV…ERQVVSMVFG (100 aa)). The interval 732-1518 (LKPVPRSARH…IARDDLTGEL (787 aa)) is cyclic di-GMP binding domain. The interval 765–785 (APSPDQSGVTAETPFGDSNTG) is disordered. Residues 768 to 785 (PDQSGVTAETPFGDSNTG) are compositionally biased toward polar residues. Residues 1481–1501 (ALYLAGLAGAGLAALGVWAWL) traverse the membrane as a helical segment.

In the N-terminal section; belongs to the glycosyltransferase 2 family. It in the C-terminal section; belongs to the AcsB/BcsB family.

It is found in the cell inner membrane. It carries out the reaction [(1-&gt;4)-beta-D-glucosyl](n) + UDP-alpha-D-glucose = [(1-&gt;4)-beta-D-glucosyl](n+1) + UDP + H(+). It participates in glycan metabolism; bacterial cellulose biosynthesis. The protein is Putative cellulose synthase 2 (bcsABII-A) of Komagataeibacter xylinus (Gluconacetobacter xylinus).